The primary structure comprises 473 residues: Argininosuccinate lyase (473 aa).

This sequence belongs to the lyase 1 family. Argininosuccinate lyase subfamily.

The protein resides in the cytoplasm. It carries out the reaction 2-(N(omega)-L-arginino)succinate = fumarate + L-arginine. Its pathway is amino-acid biosynthesis; L-arginine biosynthesis; L-arginine from L-ornithine and carbamoyl phosphate: step 3/3. In Mycobacteroides abscessus (strain ATCC 19977 / DSM 44196 / CCUG 20993 / CIP 104536 / JCM 13569 / NCTC 13031 / TMC 1543 / L948) (Mycobacterium abscessus), this protein is Argininosuccinate lyase.